We begin with the raw amino-acid sequence, 337 residues long: Glyceraldehyde-3-phosphate dehydrogenase (337 aa).

NAD(+) is bound by residues 12–13 (RI), Asp-34, and Lys-79. D-glyceraldehyde 3-phosphate-binding positions include 150-152 (SCT), Thr-181, 210-211 (TG), and Arg-233. The active-site Nucleophile is the Cys-151. Position 315 (Asn-315) interacts with NAD(+).

It belongs to the glyceraldehyde-3-phosphate dehydrogenase family. In terms of assembly, homotetramer.

The protein resides in the cytoplasm. It carries out the reaction D-glyceraldehyde 3-phosphate + phosphate + NAD(+) = (2R)-3-phospho-glyceroyl phosphate + NADH + H(+). It participates in carbohydrate degradation; glycolysis; pyruvate from D-glyceraldehyde 3-phosphate: step 1/5. This is Glyceraldehyde-3-phosphate dehydrogenase (GPD) from Cochliobolus lunatus (Filamentous fungus).